The sequence spans 274 residues: Pyrroline-5-carboxylate reductase 3 (274 aa).

The protein belongs to the pyrroline-5-carboxylate reductase family. Homodecamer; composed of 5 homodimers.

The protein resides in the cytoplasm. The catalysed reaction is L-proline + NADP(+) = (S)-1-pyrroline-5-carboxylate + NADPH + 2 H(+). The enzyme catalyses L-proline + NAD(+) = (S)-1-pyrroline-5-carboxylate + NADH + 2 H(+). It functions in the pathway amino-acid biosynthesis; L-proline biosynthesis; L-proline from L-glutamate 5-semialdehyde: step 1/1. In terms of biological role, oxidoreductase that catalyzes the last step in proline biosynthesis, which corresponds to the reduction of pyrroline-5-carboxylate (P5C) to L-proline using NAD(P)H. Proline is synthesized from either glutamate or ornithine; both are converted to P5C, and then to proline via pyrroline-5-carboxylate reductases (PYCRs). PYCR3 is exclusively linked to the biosynthesis of proline from ornithine. This Xenopus laevis (African clawed frog) protein is Pyrroline-5-carboxylate reductase 3.